Here is a 369-residue protein sequence, read N- to C-terminus: UDP-N-acetylglucosamine--N-acetylmuramyl-(pentapeptide) pyrophosphoryl-undecaprenol N-acetylglucosamine transferase (369 aa).

UDP-N-acetyl-alpha-D-glucosamine contacts are provided by residues 10–12 (TAG), Asn-124, Arg-166, Ser-196, Ile-251, and Gln-296.

It belongs to the glycosyltransferase 28 family. MurG subfamily.

It is found in the cell membrane. It catalyses the reaction di-trans,octa-cis-undecaprenyl diphospho-N-acetyl-alpha-D-muramoyl-L-alanyl-D-glutamyl-meso-2,6-diaminopimeloyl-D-alanyl-D-alanine + UDP-N-acetyl-alpha-D-glucosamine = di-trans,octa-cis-undecaprenyl diphospho-[N-acetyl-alpha-D-glucosaminyl-(1-&gt;4)]-N-acetyl-alpha-D-muramoyl-L-alanyl-D-glutamyl-meso-2,6-diaminopimeloyl-D-alanyl-D-alanine + UDP + H(+). It participates in cell wall biogenesis; peptidoglycan biosynthesis. In terms of biological role, cell wall formation. Catalyzes the transfer of a GlcNAc subunit on undecaprenyl-pyrophosphoryl-MurNAc-pentapeptide (lipid intermediate I) to form undecaprenyl-pyrophosphoryl-MurNAc-(pentapeptide)GlcNAc (lipid intermediate II). The protein is UDP-N-acetylglucosamine--N-acetylmuramyl-(pentapeptide) pyrophosphoryl-undecaprenol N-acetylglucosamine transferase of Acetivibrio thermocellus (strain ATCC 27405 / DSM 1237 / JCM 9322 / NBRC 103400 / NCIMB 10682 / NRRL B-4536 / VPI 7372) (Clostridium thermocellum).